The sequence spans 245 residues: PF03932 family protein CutC (245 aa).

This sequence belongs to the CutC family.

Its subcellular location is the cytoplasm. The protein is PF03932 family protein CutC of Rhizobium meliloti (strain 1021) (Ensifer meliloti).